Reading from the N-terminus, the 238-residue chain is 6-phosphogluconolactonase (238 aa).

It belongs to the glucosamine/galactosamine-6-phosphate isomerase family. 6-phosphogluconolactonase subfamily.

It catalyses the reaction 6-phospho-D-glucono-1,5-lactone + H2O = 6-phospho-D-gluconate + H(+). Its pathway is carbohydrate degradation; pentose phosphate pathway; D-ribulose 5-phosphate from D-glucose 6-phosphate (oxidative stage): step 2/3. Its function is as follows. Hydrolysis of 6-phosphogluconolactone to 6-phosphogluconate. This is 6-phosphogluconolactonase (pgl) from Pseudomonas aeruginosa (strain ATCC 15692 / DSM 22644 / CIP 104116 / JCM 14847 / LMG 12228 / 1C / PRS 101 / PAO1).